The sequence spans 506 residues: Epstein-Barr nuclear antigen leader protein (506 aa).

Disordered regions lie at residues 1-470 (MGDR…PRPP) and 485-506 (FEPP…EDED). Ser35 carries the phosphoserine; by host modification.

The protein belongs to the lymphocryptovirus EBNA-LP family. As to quaternary structure, homooligomer. Interacts with host SP100; this interaction is important for EBNA-LP coactivator activity. Interacts with host HAX1, ERR1 and HSPA2. Interacts with host PRKDC and AKAP8L; these interactions modulate the coactivator function of EBNA-LP. In terms of processing, phosphorylated by the cellular protein kinase cdc2.

The protein localises to the host nucleus. In terms of biological role, plays an important role in the establishment of B-cell immortalization by acting as an EBNA2 coactivator. This transcriptional activation preferentially enhances the expression of the major viral protein LMP1. The interaction between EBNA-LP and host SP100 correlates with coactivation of EBNA2 and the relocalization of SP100 from PML nuclear bodies into nucleoplasm. The polypeptide is Epstein-Barr nuclear antigen leader protein (EBNA-LP) (Epstein-Barr virus (strain B95-8) (HHV-4)).